The chain runs to 605 residues: MCGIVGVTGKDSAVSILLNGLEKLEYRGYDSAGIYVNDQDGHDYLVKEKGRIDDLRKEVGEAVHGSTGIGHTRWATHGEPSVANAHPQVSADGRFYLVHNGVIENFEDLKQTYLSDVTFKSQTDTEVIVQLVDRFVTKEGLSTLAAFRKTLGLLGHSSYGFLLMDKEDPDTLYVAKNKSPLLIGVGEGFNVVCSDSLAMLDQTKDFLELHDGEIVVVKPDEIKITNQAGEPVERKPFHVDIDAAQADKGTYPFYMLKEIDEQPNVMRKLSQVYLNDAGDPIINDDLLTALKAADRLYIVAAGTSYHAGLVGAKLFESLANVPTEVHVSSEFAYNQPLLSAHPFFIFLTQSGETADSREVLLNVNDQHFPSLTITNVPNSTLSREATYTLLLHAGPEIAVASTKAYTAQIALQAILAKALGVAVDQPAATAFDVKQQLALVANGMQSLVDEKATFEKIAKSALLNTPNAFYIGRGLDYAVSLETALKLKEISYVQAEGFASGELKHGTIALIEKDTPVIGIITQKNTAGLTRSNLQEVAARGAKTVTIVTDSLAKDGDTVILPTVDERLTALLSVVPGQLLAYYTSLNKGLDVDKPRNLAKSVTVE.

C2 (nucleophile; for GATase activity) is an active-site residue. The 219-residue stretch at 2–220 (CGIVGVTGKD…DGEIVVVKPD (219 aa)) folds into the Glutamine amidotransferase type-2 domain. 2 SIS domains span residues 286 to 426 (LLTA…VDQP) and 458 to 595 (AKSA…VDKP). The active-site For Fru-6P isomerization activity is K600.

In terms of assembly, homodimer.

The protein localises to the cytoplasm. It catalyses the reaction D-fructose 6-phosphate + L-glutamine = D-glucosamine 6-phosphate + L-glutamate. Functionally, catalyzes the first step in hexosamine metabolism, converting fructose-6P into glucosamine-6P using glutamine as a nitrogen source. The sequence is that of Glutamine--fructose-6-phosphate aminotransferase [isomerizing] from Lactiplantibacillus plantarum (strain ATCC BAA-793 / NCIMB 8826 / WCFS1) (Lactobacillus plantarum).